We begin with the raw amino-acid sequence, 382 residues long: Carbamoyl phosphate synthase small chain (382 aa).

The segment at 1-189 is CPSase; that stretch reads MIKSALLVLE…GLPEAKKEDE (189 aa). S47, G241, and G243 together coordinate L-glutamine. The Glutamine amidotransferase type-1 domain maps to 193–380; it reads HVVAYDFGAK…IELIEQYRKT (188 aa). C269 (nucleophile) is an active-site residue. 5 residues coordinate L-glutamine: L270, Q273, N311, G313, and F314. Residues H353 and E355 contribute to the active site.

This sequence belongs to the CarA family. In terms of assembly, composed of two chains; the small (or glutamine) chain promotes the hydrolysis of glutamine to ammonia, which is used by the large (or ammonia) chain to synthesize carbamoyl phosphate. Tetramer of heterodimers (alpha,beta)4.

It catalyses the reaction hydrogencarbonate + L-glutamine + 2 ATP + H2O = carbamoyl phosphate + L-glutamate + 2 ADP + phosphate + 2 H(+). The catalysed reaction is L-glutamine + H2O = L-glutamate + NH4(+). It functions in the pathway amino-acid biosynthesis; L-arginine biosynthesis; carbamoyl phosphate from bicarbonate: step 1/1. The protein operates within pyrimidine metabolism; UMP biosynthesis via de novo pathway; (S)-dihydroorotate from bicarbonate: step 1/3. Functionally, small subunit of the glutamine-dependent carbamoyl phosphate synthetase (CPSase). CPSase catalyzes the formation of carbamoyl phosphate from the ammonia moiety of glutamine, carbonate, and phosphate donated by ATP, constituting the first step of 2 biosynthetic pathways, one leading to arginine and/or urea and the other to pyrimidine nucleotides. The small subunit (glutamine amidotransferase) binds and cleaves glutamine to supply the large subunit with the substrate ammonia. The sequence is that of Carbamoyl phosphate synthase small chain from Escherichia coli O157:H7.